A 331-amino-acid polypeptide reads, in one-letter code: UPF0194 membrane protein YbhG (331 aa).

The signal sequence occupies residues 1-19; the sequence is MKKPVVIGLAIAAIVAVIA. Residues 107–208 adopt a coiled-coil conformation; sequence EEIAQAAAAV…LDLQDTTLIA (102 aa).

Belongs to the UPF0194 family.

It localises to the periplasm. The sequence is that of UPF0194 membrane protein YbhG from Salmonella agona (strain SL483).